A 347-amino-acid chain; its full sequence is Protein YIPF3 (347 aa).

The disordered stretch occupies residues 1-28 (MATQAAPASGVRNGAGPEWGGFEENIQG). Alanine 2 is modified (N-acetylalanine). The Cytoplasmic portion of the chain corresponds to 2 to 145 (ATQAAPASGV…PIKMVNFPQK (144 aa)). Residues 146 to 166 (VAGELYGPLMLVFTLVAILLH) form a helical membrane-spanning segment. At 167 to 184 (GMKTSDTIIREGTLMGTA) the chain is on the lumenal side. Residues 185–205 (IGTCFGYWLGVSSFIYFLAYL) traverse the membrane as a helical segment. Residues 206–211 (CNAQIT) lie on the Cytoplasmic side of the membrane. Residues 212–234 (MLQMLALLGYGLFGHCIVLFITY) traverse the membrane as a helical segment. At 235–237 (NIH) the chain is on the lumenal side. The helical transmembrane segment at 238-260 (LHALFYLFWLLLGGLSTLRMVAV) threads the bilayer. Topologically, residues 261-271 (LVSRTVGPTQR) are cytoplasmic. A helical membrane pass occupies residues 272–292 (LLLCGTLAALHMLFLLYLHFA). Over 293 to 347 (YHKVVEGILDTLEGPNIPPMQRVPRDIPAVLPAAKLPVAVVNATAKAIAVTLQSH) the chain is Lumenal. Asparagine 334 carries an N-linked (GlcNAc...) asparagine glycan.

It belongs to the YIP1 family. Interacts with YIPF4 and YIPF5.

It is found in the cell membrane. The protein resides in the golgi apparatus. Its subcellular location is the cis-Golgi network membrane. The protein localises to the cytoplasm. Involved in the maintenance of the Golgi structure. May play a role in hematopoiesis. The chain is Protein YIPF3 (Yipf3) from Rattus norvegicus (Rat).